A 32-amino-acid polypeptide reads, in one-letter code: Photosystem I reaction center subunit XII (32 aa).

The chain crosses the membrane as a helical span at residues 4 to 26; that stretch reads ISDSQIIVILLSVFITSILALRL.

It belongs to the PsaM family.

Its subcellular location is the plastid. The protein resides in the chloroplast thylakoid membrane. This Marchantia polymorpha (Common liverwort) protein is Photosystem I reaction center subunit XII.